The primary structure comprises 148 residues: Large ribosomal subunit protein uL15 (148 aa).

A disordered region spans residues 1 to 51; sequence MNLSNLKPAEGSTKTRKRIGRGPGSGLGGTSTRGHKGAKSRSGYKNKIGFE. A compositionally biased stretch (gly residues) spans 21–31; the sequence is RGPGSGLGGTS. The segment covering 33-44 has biased composition (basic residues); the sequence is RGHKGAKSRSGY.

The protein belongs to the universal ribosomal protein uL15 family. Part of the 50S ribosomal subunit.

In terms of biological role, binds to the 23S rRNA. The sequence is that of Large ribosomal subunit protein uL15 from Parabacteroides distasonis (strain ATCC 8503 / DSM 20701 / CIP 104284 / JCM 5825 / NCTC 11152).